A 214-amino-acid polypeptide reads, in one-letter code: Adenylate kinase (214 aa).

Gly-10 to Thr-15 contacts ATP. The NMP stretch occupies residues Ser-30 to Val-59. Residues Thr-31, Arg-36, Lys-57–Val-59, Gly-85–Arg-88, and Gln-92 each bind AMP. An LID region spans residues Gly-122–Asp-159. ATP-binding positions include Arg-123 and Val-132–Tyr-133. Positions 156 and 167 each coordinate AMP. The residue at position 192 (Lys-192) is an N6-acetyllysine. Lys-200 provides a ligand contact to ATP.

This sequence belongs to the adenylate kinase family. As to quaternary structure, monomer.

The protein resides in the cytoplasm. The enzyme catalyses AMP + ATP = 2 ADP. Its pathway is purine metabolism; AMP biosynthesis via salvage pathway; AMP from ADP: step 1/1. Functionally, catalyzes the reversible transfer of the terminal phosphate group between ATP and AMP. Plays an important role in cellular energy homeostasis and in adenine nucleotide metabolism. This Escherichia coli O8 (strain IAI1) protein is Adenylate kinase.